The sequence spans 315 residues: Small ribosomal subunit protein uS9m (315 aa).

A mitochondrion-targeting transit peptide spans 1–42 (MMASLRHSITSALRSSRQGCSKSAQWQSLDQQFGALRISSRS). The segment at 293 to 315 (PRKVERKKHGHVKARKMPTWVKR) is disordered. Positions 296–315 (VERKKHGHVKARKMPTWVKR) are enriched in basic residues.

The protein belongs to the universal ribosomal protein uS9 family. As to quaternary structure, component of the mitochondrial small ribosomal subunit (mt-SSU). Mature N.crassa 74S mitochondrial ribosomes consist of a small (37S) and a large (54S) subunit. The 37S small subunit contains a 16S ribosomal RNA (16S mt-rRNA) and 32 different proteins. The 54S large subunit contains a 23S rRNA (23S mt-rRNA) and 42 different proteins.

The protein localises to the mitochondrion. Functionally, component of the mitochondrial ribosome (mitoribosome), a dedicated translation machinery responsible for the synthesis of mitochondrial genome-encoded proteins, including at least some of the essential transmembrane subunits of the mitochondrial respiratory chain. The mitoribosomes are attached to the mitochondrial inner membrane and translation products are cotranslationally integrated into the membrane. The polypeptide is Small ribosomal subunit protein uS9m (mrp-9) (Neurospora crassa (strain ATCC 24698 / 74-OR23-1A / CBS 708.71 / DSM 1257 / FGSC 987)).